Reading from the N-terminus, the 89-residue chain is Small ribosomal subunit protein uS19 (89 aa).

This sequence belongs to the universal ribosomal protein uS19 family.

Its function is as follows. Protein S19 forms a complex with S13 that binds strongly to the 16S ribosomal RNA. The sequence is that of Small ribosomal subunit protein uS19 from Stenotrophomonas maltophilia (strain R551-3).